The sequence spans 309 residues: THO complex subunit Tho3 (309 aa).

WD repeat units lie at residues glycine 22 to threonine 61, glycine 65 to glutamate 107, glutamate 109 to threonine 148, alanine 192 to serine 231, arginine 234 to lysine 273, and proline 275 to leucine 309.

It belongs to the THOC3 family. Component of the transcription/export (TREX) complex, which is at least is formed of SUB2, TEX1 and YRA1 and the THO complex composed of HPR1, MFT1, THO2 and THP1.

Its subcellular location is the nucleus. Its function is as follows. Component of the TREX complex, which operates in coupling transcription elongation to mRNA export. In Schizosaccharomyces pombe (strain 972 / ATCC 24843) (Fission yeast), this protein is THO complex subunit Tho3 (THO3).